Consider the following 355-residue polypeptide: NAD-dependent protein deacylase sirtuin-6 (355 aa).

Residue Ser-2 is modified to N-acetylserine. The residue at position 10 (Ser-10) is a Phosphoserine. Residues 27–272 (PEELERKVWE…TRLMKHLGLE (246 aa)) form the Deacetylase sirtuin-type domain. Lys-33 is subject to N6-acetyllysine. NAD(+) is bound by residues Ala-53, Thr-57, Phe-64, Arg-65, Trp-71, Gln-113, and His-133. Residue His-133 is the Proton acceptor of the active site. Cys-141, Cys-144, and Cys-166 together coordinate Zn(2+). Lys-170 is covalently cross-linked (Glycyl lysine isopeptide (Lys-Gly) (interchain with G-Cter in ubiquitin)). Residue Cys-177 coordinates Zn(2+). Residues Gly-214, Ser-216, Asn-240, Gln-242, and Val-258 each contribute to the NAD(+) site. The tract at residues 284-355 (RALPPLPRPP…KRVKAEAVPS (72 aa)) is disordered. The segment covering 287-296 (PPLPRPPTPK) has biased composition (pro residues). A Phosphothreonine modification is found at Thr-294. Phosphoserine occurs at positions 303 and 330.

It belongs to the sirtuin family. Class IV subfamily. As to quaternary structure, homodimer; binds to nucleosomes and DNA ends as a homodimer. Interacts with RELA; interferes with RELA binding to target DNA. Interacts with SMARCA5; promoting recruitment of SMARCA5/SNF2H to double-strand breaks (DSBs) sites. Interacts with the mTORC2 complex; preventing the ability of SIRT6 to deacetylate FOXO1. Interacts with the CLOCK-BMAL1 complex; recruited by the CLOCK-BMAL1 complex to regulate expression of clock-controlled genes. Interacts with CSNK2A2; preventing CSNK2A2 localization to the nucleus. Post-translationally, acetylated at Lys-33. Deacetylation at Lys-33 by SIRT1 promotes homomultimerization and binding to double-strand breaks (DSBs) sites. Phosphorylation at Ser-10 by MAPK8/JNK1 in response to oxidative stress stimulates the mono-ADP-ribosyltransferase activity on PARP1, leading to PARP1 recruitment to double-strand breaks (DSBs). In terms of processing, monoubiquitinated at Lys-170 by STUB1/CHIP, preventing its degradation by the proteasome. Post-translationally, sumoylated, leading to specifically decrease ability to deacetylate histone H3 at 'Lys-56' (H3K56ac).

It localises to the nucleus. The protein localises to the chromosome. Its subcellular location is the telomere. It is found in the endoplasmic reticulum. The enzyme catalyses N(6)-acetyl-L-lysyl-[protein] + NAD(+) + H2O = 2''-O-acetyl-ADP-D-ribose + nicotinamide + L-lysyl-[protein]. The catalysed reaction is N(6)-tetradecanoyl-L-lysyl-[protein] + NAD(+) + H2O = 2''-O-tetradecanoyl-ADP-D-ribose + nicotinamide + L-lysyl-[protein]. It carries out the reaction N(6)-hexadecanoyl-L-lysyl-[protein] + NAD(+) + H2O = 2''-O-hexadecanoyl-ADP-D-ribose + nicotinamide + L-lysyl-[protein]. It catalyses the reaction L-lysyl-[protein] + NAD(+) = N(6)-(ADP-D-ribosyl)-L-lysyl-[protein] + nicotinamide + H(+). The enzyme catalyses L-arginyl-[protein] + NAD(+) = N(omega)-(ADP-D-ribosyl)-L-arginyl-[protein] + nicotinamide + H(+). With respect to regulation, compared to the defatty-acylase activity, the protein deacetylase activity is weak in vitro, and requires activation. The histone deacetylase activity is strongly activated upon binding to nucleosomes and chromatin in vivo. Two molecules of SIRT6 associate with the acidic patch of one nucleosome, while the C-terminal disordered region of SIRT6 associates with nucleosomal DNA, leading to efficient histone deacetylation. The protein-lysine deacetylase activity is also activated by long-chain free fatty-acids. NAD-dependent protein deacetylase, deacylase and mono-ADP-ribosyltransferase that plays an essential role in DNA damage repair, telomere maintenance, metabolic homeostasis, inflammation, tumorigenesis and aging. Displays protein-lysine deacetylase or defatty-acylase (demyristoylase and depalmitoylase) activity, depending on the context. Acts as a key histone deacetylase by catalyzing deacetylation of histone H3 at 'Lys-9', 'Lys-18' and 'Lys-56' (H3K9ac, H3K18ac and H3K56ac, respectively), suppressing target gene expression of several transcription factors, including NF-kappa-B. Acts as an inhibitor of transcription elongation by mediating deacetylation of H3K9ac and H3K56ac, preventing release of NELFE from chromatin and causing transcriptional pausing. Involved in DNA repair by promoting double-strand break (DSB) repair: acts as a DSB sensor by recognizing and binding DSB sites, leading to (1) recruitment of DNA repair proteins, such as SMARCA5/SNF2H, and (2) deacetylation of histone H3K9ac and H3K56ac. SIRT6 participation to DSB repair is probably involved in extension of life span. Also promotes DNA repair by deacetylating non-histone proteins, such as DDB2 and p53/TP53. Specifically deacetylates H3K18ac at pericentric heterochromatin, thereby maintaining pericentric heterochromatin silencing at centromeres and protecting against genomic instability and cellular senescence. Involved in telomere maintenance by catalyzing deacetylation of histone H3 in telomeric chromatin, regulating telomere position effect and telomere movement in response to DNA damage. Required for embryonic stem cell differentiation by mediating histone deacetylation of H3K9ac. Plays a major role in metabolism by regulating processes such as glycolysis, gluconeogenesis, insulin secretion and lipid metabolism. Inhibits glycolysis via histone deacetylase activity and by acting as a corepressor of the transcription factor HIF1A, thereby controlling the expression of multiple glycolytic genes. Has tumor suppressor activity by repressing glycolysis, thereby inhibiting the Warburg effect. Also regulates glycolysis and tumorigenesis by mediating deacetylation and nuclear export of non-histone proteins, such as isoform M2 of PKM (PKM2). Acts as a negative regulator of gluconeogenesis by mediating deacetylation of non-histone proteins, such as FOXO1 and KAT2A/GCN5. Promotes beta-oxidation of fatty acids during fasting by catalyzing deacetylation of NCOA2, inducing coactivation of PPARA. Acts as a regulator of lipid catabolism in brown adipocytes, both by catalyzing deacetylation of histones and non-histone proteins, such as FOXO1. Also acts as a regulator of circadian rhythms, both by regulating expression of clock-controlled genes involved in lipid and carbohydrate metabolism, and by catalyzing deacetylation of PER2. The defatty-acylase activity is specifically involved in regulation of protein secretion. Has high activity toward long-chain fatty acyl groups and mediates protein-lysine demyristoylation and depalmitoylation of target proteins, such as RRAS2 and TNF, thereby regulating their secretion. Also acts as a mono-ADP-ribosyltransferase by mediating mono-ADP-ribosylation of PARP1, TRIM28/KAP1 or SMARCC2/BAF170. Mono-ADP-ribosyltransferase activity is involved in DNA repair, cellular senescence, repression of LINE-1 retrotransposon elements and regulation of transcription. The protein is NAD-dependent protein deacylase sirtuin-6 of Macaca fascicularis (Crab-eating macaque).